A 221-amino-acid chain; its full sequence is MSVIAKQMTYKVYMSGTVNGHYFEVQGDGKGKPYEGEQTVKLTVTKGGPLPFAWDILSPQSQYGSIPFTKYPEDIPDYVKQSFPEGYTWERIMNFEDGAVCTVSNDSSIQGNCFIYNVKFSGLNFPPNGPVMQKKTQGWEPNTERLFARDGMLIGNNFMALKLEGGGHYLCEFKSTYKAKKPVKMPGYHYVDRKLDVTNHNIDYTSVEQCEISIARKPVVA.

The 2-iminomethyl-5-imidazolinone (Gln-Gly) cross-link spans 62 to 64 (QYG). Y63 is subject to 2,3-didehydrotyrosine.

Belongs to the GFP family. Homotetramer. Contains a chromophore consisting of modified amino acid residues. The chromophore is formed by autocatalytic backbone condensation between Xaa-N and Gly-(N+2), oxidation of Tyr-(N+1) to didehydrotyrosine, and formation of a double bond to the alpha-amino nitrogen of residue Xaa-N. Maturation of the chromophore requires nothing other than molecular oxygen. The precise stereochemistry of the tyrosine has not been determined.

Its function is as follows. Non-fluorescent pigment protein that is lilac in color. This is GFP-like non-fluorescent chromoprotein from Goniopora tenuidens (Anemone coral).